The sequence spans 424 residues: Histidine--tRNA ligase (424 aa).

The protein belongs to the class-II aminoacyl-tRNA synthetase family. In terms of assembly, homodimer.

The protein resides in the cytoplasm. It catalyses the reaction tRNA(His) + L-histidine + ATP = L-histidyl-tRNA(His) + AMP + diphosphate + H(+). The sequence is that of Histidine--tRNA ligase from Klebsiella pneumoniae (strain 342).